The sequence spans 157 residues: Oleosin-B1 (157 aa).

Positions 2-20 (GILRKKKHERNASFKSVLT) are polar. Residues 21–138 (SILATQAATF…AAPAAAPAAA (118 aa)) form a hydrophobic region. Helical transmembrane passes span 22-42 (ILATQAATFLLLISGVSLAGT), 45-65 (AFIATMPLFVVFSPILVPAGI), and 72-92 (TGLAAAGGAGATAVTIILWLY). 9 consecutive repeat copies span residues 119-122 (PRAA), 123-126 (PAAA), 127-130 (PAAA), 131-134 (PAAA), 135-138 (PAAA), 139-142 (PAPK), 143-146 (PAAA), 147-150 (PAPK), and 151-154 (PAAP). The tract at residues 119-122 (PRAA) is 9 X 4 AA tandem repeats of P-[AR]-[AP]-[AKP]. Residues 137 to 157 (AAPAPKPAAAPAPKPAAPPAL) are disordered. Positions 138 to 157 (APAPKPAAAPAPKPAAPPAL) are enriched in pro residues.

It belongs to the oleosin family. In terms of tissue distribution, the full-length protein is found in the tapetal lipid bodies of immature anthers, the proteolytically cleaved C-terminal product is found on the coats of pollen grains. Highest expression is in microspores entering and undergoing mitosis. No expression is observed in male-sterile plants, green tissues or roots.

The protein resides in the lipid droplet. It is found in the membrane. In terms of biological role, many of the major pollen coat proteins are derived from endoproteolytic cleavage of oleosin-like proteins. In Brassica napus (Rape), this protein is Oleosin-B1 (OlnB1).